The following is a 249-amino-acid chain: Tumor necrosis factor ligand superfamily member 12 (249 aa).

Over 1 to 21 the chain is Cytoplasmic; the sequence is MAARRSQRRRGRRGEPGTALL. A helical; Signal-anchor for type II membrane protein membrane pass occupies residues 22-45; sequence APLVLSLGLALACLGLLLVVVSLG. The Extracellular portion of the chain corresponds to 46-249; that stretch reads SWATLSAQEP…LTYFGLFQVH (204 aa). Positions 52-78 are disordered; the sequence is AQEPSQEELTAEDRREPPELNPQTEES. The region spanning 107–248 is the THD domain; the sequence is IAAHYEVHPR…FLTYFGLFQV (142 aa). Residue N139 is glycosylated (N-linked (GlcNAc...) asparagine). A disulfide bond links C191 and C210.

The protein belongs to the tumor necrosis factor family. As to quaternary structure, homotrimer. Interacts with the angiogenic factor AGGF1/VG5Q. Post-translationally, the soluble form is produced from the membrane form by proteolytic processing. In terms of tissue distribution, widely expressed.

The protein localises to the cell membrane. Its subcellular location is the secreted. In terms of biological role, binds to FN14 and possibly also to TNRFSF12/APO3. Weak inducer of apoptosis in some cell types. Mediates NF-kappa-B activation. Promotes angiogenesis and the proliferation of endothelial cells. Also involved in induction of inflammatory cytokines. Promotes IL8 secretion. This Mus musculus (Mouse) protein is Tumor necrosis factor ligand superfamily member 12 (Tnfsf12).